The sequence spans 2363 residues: Spectrin beta chain, non-erythrocytic 1 (2363 aa).

Threonine 2 carries the post-translational modification N-acetylthreonine. The segment at 2–275 (TTTVATDYDN…IITYVVTYYH (274 aa)) is actin-binding. Residues isoleucine 14 and serine 36 each carry the phosphoserine modification. Calponin-homology (CH) domains are found at residues 54-158 (AVQK…LRFQ) and 173-278 (KSAK…HYFS). Lysine 90 is modified (N6-acetyllysine). Residue serine 228 is modified to Phosphoserine. Spectrin repeat units follow at residues 303–411 (MIEK…LALR), 423–525 (LARR…QRLE), 530–636 (LQKI…RLEE), 639–742 (RLWK…RLEE), 745–847 (LLHQ…ALQD), 850–952 (ALYK…DALL), 957–1060 (IQNY…SLGE), 1063–1166 (KLQQ…NLLS), 1170–1259 (AYQQ…RHRK), 1276–1376 (DLQK…AQRL), 1381–1482 (KAEL…HNLL), 1486–1590 (EIHQ…RLEE), 1592–1696 (HKAQ…KLDE), 1698–1801 (HRLF…TQIL), and 1805–1907 (YELH…RVRL). Serine 817, serine 903, serine 1057, serine 1076, serine 1079, and serine 1237 each carry phosphoserine. 3 positions are modified to phosphoserine: serine 1388, serine 1447, and serine 1557. Positions 1563–2093 (IRQRLADLKQ…LLEVRRQQEE (531 aa)) are interaction with ANK2. The residue at position 1805 (tyrosine 1805) is a Phosphotyrosine. N6-acetyllysine is present on residues lysine 1815, lysine 1913, and lysine 1989. Spectrin repeat units follow at residues 1914-2014 (FRFF…EWLR) and 2018-2097 (EVHQ…EERK). Positions 2089–2193 (RQQEEEERKR…AATLPARTLE (105 aa)) are disordered. 3 positions are modified to phosphoserine: serine 2102, serine 2127, and serine 2137. The segment covering 2115-2130 (SQQWDTSKGDQVSQNG) has biased composition (polar residues). Residue threonine 2146 is modified to Phosphothreonine. A Phosphoserine modification is found at serine 2147. The mediates interaction with CAMSAP1 stretch occupies residues 2148–2176 (EMVNGAAEQRTSSKESSPVPSPTLDRKAK). Threonine 2158 carries the post-translational modification Phosphothreonine. Phosphoserine occurs at positions 2159, 2160, 2163, 2164, and 2168. Threonine 2170 carries the post-translational modification Phosphothreonine. Serine 2183 is subject to Phosphoserine. A phosphothreonine mark is found at threonine 2186 and threonine 2194. The PH domain occupies 2196-2306 (AAQMEGFLNR…WIQAISSAIS (111 aa)). Residues 2308–2363 (DKHDTSASTQSTPASSRAQTLPTSVVTITSESSPGKREKDKEKDKEKRFSLFGKKK) form a disordered region. Residues serine 2313 and serine 2318 each carry the phosphoserine modification. A compositionally biased stretch (low complexity) spans 2313-2327 (SASTQSTPASSRAQT). Threonine 2319 is subject to Phosphothreonine. Residue serine 2323 is glycosylated (O-linked (GlcNAc) serine). Position 2327 is a phosphothreonine (threonine 2327). A compositionally biased stretch (polar residues) spans 2328 to 2340 (LPTSVVTITSESS). 2 positions are modified to phosphoserine: serine 2339 and serine 2340. Over residues 2341-2356 (PGKREKDKEKDKEKRF) the composition is skewed to basic and acidic residues.

This sequence belongs to the spectrin family. As to quaternary structure, interacts with ANK2. Interacts with CPNE4 (via VWFA domain). Like erythrocyte spectrin, the spectrin-like proteins are capable to form dimers which can further associate to tetramers. Interacts with CAMSAP1. Can form heterodimers with SPTAN1. In terms of tissue distribution, isoform 2 is present in brain, heart, kidney and liver (at protein level).

Its subcellular location is the cytoplasm. The protein resides in the cytoskeleton. It localises to the endomembrane system. The protein localises to the myofibril. It is found in the sarcomere. Its subcellular location is the m line. The protein resides in the cytosol. It localises to the cell membrane. Fodrin, which seems to be involved in secretion, interacts with calmodulin in a calcium-dependent manner and is thus candidate for the calcium-dependent movement of the cytoskeleton at the membrane. Plays a critical role in central nervous system development and function. This chain is Spectrin beta chain, non-erythrocytic 1 (Sptbn1), found in Mus musculus (Mouse).